A 457-amino-acid chain; its full sequence is Putative metabolite transport protein YwtG (457 aa).

Transmembrane regions (helical) follow at residues 7 to 27 (IWLY…TGVI), 38 to 58 (LGLN…GAIL), 75 to 95 (AIMA…LAPN), 97 to 117 (GVMV…TTIV), 136 to 156 (LNQL…YIFA), 163 to 183 (WMLG…LFMP), 240 to 260 (ALIA…NTII), 276 to 296 (ASIL…LVAI), 309 to 329 (LFGN…NLFF), 340 to 360 (VICL…VVWV), 377 to 397 (VSTL…PILM), and 400 to 420 (IGIS…FLFV). The segment at 438–457 (DLRDKNGQGGAAGKQQTVGT) is disordered.

It belongs to the major facilitator superfamily. Sugar transporter (TC 2.A.1.1) family.

The protein resides in the cell membrane. This chain is Putative metabolite transport protein YwtG (ywtG), found in Bacillus subtilis (strain 168).